We begin with the raw amino-acid sequence, 513 residues long: MEKFEGYSEKQKSRQQYFVYPLLFQEYIYAFAHDYGLNGSEPVEIIGCNNKKFSSLLVKRLIIRMYQQNFWINSVNHPNQDRLLDHSNYFYSEFYSQILSEGFAIVVEIPFSLGELSCPEEKEIPKFQNLQSIHSIFPFLEDKFLHLHYLSHLEIPYPIHLEILVQLLEYRIQDVPSLHLLRFFLNYYSNWNSLITSMKSIFLLKKENKRLFRFLYNSYVSEYEFFLLFLRKQSSCLRLTSSGTFLERIHFSRKMEHFGVMYPGFFRKTIWFFMDPLMHYARYQGKAILASKGTLLLKKKWKSYLVNFSQYFFSFWTQPQRIRINQLTNSCFDFLGYLSSVPINTLLVRNQMLENSFLIDTRMKKFDTTVPATPLIGSLSKAQFCTGSGHPISKPVWTDLSDWDILDRFGRISRNLFHYHSGSSKKRTLYRLKYILRLSCARTLARKHKSTVRTFMQRLGSVFLEEFFTEEEQVFSLMFTKTTHFSFHGSHSERIWYLDIIRINDLVNPLTLN.

It belongs to the intron maturase 2 family. MatK subfamily.

The protein localises to the plastid. It is found in the chloroplast. In terms of biological role, usually encoded in the trnK tRNA gene intron. Probably assists in splicing its own and other chloroplast group II introns. This chain is Maturase K, found in Phragmites australis (Common reed).